A 92-amino-acid chain; its full sequence is MKFNAVVRTDLGKGASRRLRLTEKFPAIIYGGEAAPVAIELLHSDVINQMDKPEFYEGIILVIDGQEVAVKPQDIQRHVFKPKVEHMDFKRV.

The protein belongs to the bacterial ribosomal protein bL25 family. Part of the 50S ribosomal subunit; part of the 5S rRNA/L5/L18/L25 subcomplex. Contacts the 5S rRNA. Binds to the 5S rRNA independently of L5 and L18.

This is one of the proteins that binds to the 5S RNA in the ribosome where it forms part of the central protuberance. This Photobacterium profundum (strain SS9) protein is Large ribosomal subunit protein bL25.